A 415-amino-acid polypeptide reads, in one-letter code: Squalene synthase 2 (415 aa).

The next 2 membrane-spanning stretches (helical) occupy residues 281–301 and 392–412; these read AIFR…ALCY and LIVI…SNLP.

This sequence belongs to the phytoene/squalene synthase family. Requires Mg(2+) as cofactor. Mn(2+) serves as cofactor.

It localises to the endoplasmic reticulum membrane. The catalysed reaction is 2 (2E,6E)-farnesyl diphosphate + NADH + H(+) = squalene + 2 diphosphate + NAD(+). It catalyses the reaction 2 (2E,6E)-farnesyl diphosphate + NADPH + H(+) = squalene + 2 diphosphate + NADP(+). It functions in the pathway terpene metabolism; lanosterol biosynthesis; lanosterol from farnesyl diphosphate: step 1/3. Its function is as follows. Component of the triterpene saponins (e.g. ginsenosides or panaxosides) and phytosterols biosynthetic pathways. Catalyzes the biosynthesis of squalene. This chain is Squalene synthase 2, found in Panax ginseng (Korean ginseng).